A 186-amino-acid polypeptide reads, in one-letter code: MNQAFWKTYKSKVLQTLSGESEEDLAEERENPALVGSETAEPTEETFNPMSQLARRVQGVGVKGWLTMSSLFNKEDEDKLLPSEPCADHPLAARPPSQAAAAAEARGPGFWDAFASRWQQQQAAAASMLRGTEPTPEPDPEPADEAAEEAAERPESQEAEPVAGFKWGFLTHKLAEMRVKAAPKGD.

Disordered stretches follow at residues 17–47 (LSGE…EETF), 77–105 (EDKL…AAEA), and 121–164 (QQAA…PVAG). Positions 90–105 (PLAARPPSQAAAAAEA) are enriched in low complexity. Over residues 136-149 (PEPDPEPADEAAEE) the composition is skewed to acidic residues.

This is an uncharacterized protein from Homo sapiens (Human).